The following is a 537-amino-acid chain: Myosin-binding protein H (537 aa).

The segment covering 1 to 25 (MTGKTAPAAAKKAPAAKKAPAPASK) has biased composition (low complexity). The disordered stretch occupies residues 1 to 138 (MTGKTAPAAA…KPKEEPPSVP (138 aa)). A compositionally biased stretch (basic and acidic residues) spans 26-69 (KAPEPAPKEKPAPTPKEGHAPTPKEEHAPPPKEEHAPPPKEEHA). Low complexity predominate over residues 87–104 (EQPAAPAAEHAPTPTHEA). A compositionally biased stretch (pro residues) spans 112–124 (PPPAAPAEAPAPE). Residues 137–232 (VPLSLAVEEV…LEQPVLIREI (96 aa)) form the Fibronectin type-III 1 domain. The Ig-like C2-type 1 domain maps to 236 to 324 (PRIRLPRQLR…NGAEDKAILD (89 aa)). In terms of domain architecture, Fibronectin type-III 2 spans 333–428 (PPQNLKLVDV…AAGVAHIKKT (96 aa)). Residues 444 to 528 (PKFTQPLTDR…VNPLGEASVD (85 aa)) enclose the Ig-like C2-type 2 domain.

Belongs to the immunoglobulin superfamily. MyBP family. In terms of tissue distribution, skeletal muscle. Seems to be also expressed in the slow tonic ald muscle. Not detected in gizzard or heart.

Binds to myosin; probably involved in interaction with thick myofilaments in the A-band. In Gallus gallus (Chicken), this protein is Myosin-binding protein H (MYBPH).